Here is a 78-residue protein sequence, read N- to C-terminus: Hainantoxin-XX (78 aa).

The first 23 residues, 1–23 (MKSATLLALSFLLIALYFLICEA), serve as a signal peptide directing secretion. Positions 24 to 47 (EHSRYEEHEILEENMGDVVNLEQR) are excised as a propeptide. Cystine bridges form between C49–C62, C56–C66, and C61–C77.

It belongs to the hainantoxin family. 20 subfamily. In terms of tissue distribution, expressed by the venom gland.

Its subcellular location is the secreted. In terms of biological role, putative ion channel inhibitor. In Cyriopagopus hainanus (Chinese bird spider), this protein is Hainantoxin-XX.